Here is a 175-residue protein sequence, read N- to C-terminus: T-cell surface glycoprotein CD3 epsilon chain (175 aa).

The signal sequence occupies residues 1–21 (MRCEVPLPLLGLLLCVVGAAA). Residues 22–100 (QGGQEEFAVE…VCANCEELDT (79 aa)) are Extracellular-facing. The chain crosses the membrane as a helical span at residues 101–121 (FTVVGIIAADLLITLGVLILV). The Cytoplasmic segment spans residues 122 to 175 (YYFSKNKKGQSRAAAGSRPRAQKMRRPPPVPNPDYEPIRKGQRDVYAGLEHRGF). The segment at 133 to 163 (RAAAGSRPRAQKMRRPPPVPNPDYEPIRKGQ) is disordered. The 28-residue stretch at 146–173 (RRPPPVPNPDYEPIRKGQRDVYAGLEHR) folds into the ITAM domain.

In terms of assembly, the TCR/CD3 complex of T-lymphocytes consists of either a TCR alpha/beta or TCR gamma/delta heterodimer coexpressed at the cell surface with the invariant subunits of CD3 labeled gamma, delta, epsilon, zeta, and eta.

It localises to the cell membrane. Its function is as follows. The CD3 complex mediates signal transduction, resulting in T-cell activation and proliferation. Required for normal immune responses. This chain is T-cell surface glycoprotein CD3 epsilon chain (CD3E), found in Gallus gallus (Chicken).